A 473-amino-acid chain; its full sequence is DNA (cytosine-5)-methyltransferase DRM1A (473 aa).

The region spanning 20–61 is the UBA 1 domain; sequence SAPSALVAYFLGMGFSREMVFRAIKEIGDTDSEQILELLLTY. Residues 84 to 101 show a composition bias toward acidic residues; that stretch reads EEEDEEEDVNWDEDDTVD. Residues 84-115 are disordered; it reads EEEDEEEDVNWDEDDTVDNFDRATYSDGSGDE. Residues 120–140 enclose the UBA 2 domain; that stretch reads EMSEKDEKIKSLVSMGFPEDE. The SAM-dependent MTase DRM-type domain maps to 204–431; it reads VHRNLPDQAL…DSVKTIMASI (228 aa).

The protein belongs to the class I-like SAM-binding methyltransferase superfamily. DRM-methyltransferase family.

Its subcellular location is the nucleus. It carries out the reaction a 2'-deoxycytidine in DNA + S-adenosyl-L-methionine = a 5-methyl-2'-deoxycytidine in DNA + S-adenosyl-L-homocysteine + H(+). In terms of biological role, involved in de novo DNA methylation. Involved in RNA-directed DNA methylation (RdDM). This chain is DNA (cytosine-5)-methyltransferase DRM1A, found in Oryza sativa subsp. japonica (Rice).